Here is a 244-residue protein sequence, read N- to C-terminus: Signal recognition particle receptor subunit beta (244 aa).

Residues 7-23 (IIACLLVIGTTIALIAV) traverse the membrane as a helical segment. GTP is bound by residues 45 to 53 (GPQNSGKTS), 66 to 69 (TVVS), Gly-90, and 154 to 157 (NKSE).

Belongs to the SRP receptor beta subunit family. In terms of assembly, heterodimer of an alpha and a beta chain.

Its subcellular location is the endoplasmic reticulum membrane. Functionally, component of the signal recognition particle (SRP) complex receptor (SR). Ensures, in conjunction with the SRP complex, the correct targeting of the nascent secretory proteins to the endoplasmic reticulum membrane system. May mediate the membrane association of SR. The protein is Signal recognition particle receptor subunit beta (SRP102) of Saccharomyces cerevisiae (strain ATCC 204508 / S288c) (Baker's yeast).